The chain runs to 541 residues: Chaperonin GroEL (541 aa).

Residues Thr29–Pro32, Asp86–Thr90, Gly413, and Asp494 each bind ATP.

The protein belongs to the chaperonin (HSP60) family. In terms of assembly, forms a cylinder of 14 subunits composed of two heptameric rings stacked back-to-back. Interacts with the co-chaperonin GroES.

The protein resides in the cytoplasm. The catalysed reaction is ATP + H2O + a folded polypeptide = ADP + phosphate + an unfolded polypeptide.. Together with its co-chaperonin GroES, plays an essential role in assisting protein folding. The GroEL-GroES system forms a nano-cage that allows encapsulation of the non-native substrate proteins and provides a physical environment optimized to promote and accelerate protein folding. The protein is Chaperonin GroEL of Acetivibrio thermocellus (strain ATCC 27405 / DSM 1237 / JCM 9322 / NBRC 103400 / NCIMB 10682 / NRRL B-4536 / VPI 7372) (Clostridium thermocellum).